A 234-amino-acid polypeptide reads, in one-letter code: MATSLSVSRFMSSSATVISVAKPLLSPTVSFTAPLSFTRSLAPNLSLKFRNRRTNSASATTRSFATTPVTASISVGDKLPDSTLSYLDPSTGDVKTVTVSSLTAGKKTILFAVPGAFTPTCSQKHVPGFVSKAGELRSKGIDVIACISVNDAFVMEAWRKDLGINDEVMLLSDGNGEFTGKLGVELDLRDKPVGLGVRSRRYAILADDGVVKVLNLEEGGAFTNSSAEDMLKAL.

The transit peptide at 1 to 70 (MATSLSVSRF…TRSFATTPVT (70 aa)) directs the protein to the chloroplast. One can recognise a Thioredoxin domain in the interval 73 to 234 (ISVGDKLPDS…SSAEDMLKAL (162 aa)). Ser82 is modified (phosphoserine). Cys121 functions as the Cysteine sulfenic acid (-SOH) intermediate in the catalytic mechanism.

Belongs to the peroxiredoxin family. Prx5 subfamily. In terms of assembly, monomer. As to expression, expressed in all tissues but predominantly in buds, siliques and seeds.

It is found in the plastid. The protein resides in the chloroplast stroma. It carries out the reaction [glutaredoxin]-dithiol + a hydroperoxide = [glutaredoxin]-disulfide + an alcohol + H2O. Functionally, thiol-specific peroxidase that catalyzes the reduction of hydrogen peroxide and organic hydroperoxides to water and alcohols, respectively. Plays a role in cell protection against oxidative stress by detoxifying peroxides. May be involved in chloroplast redox homeostasis. The protein is Peroxiredoxin-2E, chloroplastic (PRXIIE) of Arabidopsis thaliana (Mouse-ear cress).